A 98-amino-acid chain; its full sequence is Cystatin-B (98 aa).

Residue methionine 1 is modified to N-acetylmethionine. Residues 46–50 carry the Secondary area of contact motif; the sequence is QLVAG.

The protein belongs to the cystatin family. As to quaternary structure, able to form dimers stabilized by noncovalent forces.

The protein localises to the cytoplasm. In terms of biological role, this is an intracellular thiol proteinase inhibitor. The polypeptide is Cystatin-B (CSTB) (Ovis aries (Sheep)).